The chain runs to 485 residues: MFAHTALRQRCAKWLLATGLFLLLGACVEKPSTLERVKEDGVLRVITRNSPATYFQDRNGETGFEYELVQHFADDLGVKLQIETADNLDELYDALGKPSGPVLAAAGLVSSERRKTQVKYSHPYLEVTPQVIYRNGRARPTGAKGLVGKKIMVLKGSSHADQLAELKKQYPALQYEESDAVEVVDLLRMVDEGQIDLTLVDSNELAMNQVYFPNVRVAFDLGDTRDQRWAVAAGEDNSLLNEINEFLDKAQKNGTLQRLKDRYYGHVDVLGYVGAYTFAQHLQQRLPKYEKHFKSYAKVEQVDWRLLAAIGYQESMWQPEVTSKTGVRGLMMLTQRTAQAMGVSNRLDPRQSIQGGAKYFMKIKEELDDSIQEPDRTWFALAAYNVGSGHLEDARTLAKREKLNPNKWLDVKKMLPRLAQKQWYRQTKYGYARGGEPVHFVANIRRYYDILTWVTQPQLEGQVAEGNLHVPGVNKDKPADKSSPM.

Positions 1–29 (MFAHTALRQRCAKWLLATGLFLLLGACVE) are cleaved as a signal peptide. The segment at 30–267 (KPSTLERVKE…RLKDRYYGHV (238 aa)) is non-LT domain. Residues 268–485 (DVLGYVGAYT…DKPADKSSPM (218 aa)) are LT domain. Glu-314 is an active-site residue. A disordered region spans residues 465–485 (EGNLHVPGVNKDKPADKSSPM). Over residues 474–485 (NKDKPADKSSPM) the composition is skewed to basic and acidic residues.

In the N-terminal section; belongs to the bacterial solute-binding protein 3 family. The protein in the C-terminal section; belongs to the transglycosylase Slt family.

The protein localises to the cell outer membrane. The enzyme catalyses Exolytic cleavage of the (1-&gt;4)-beta-glycosidic linkage between N-acetylmuramic acid (MurNAc) and N-acetylglucosamine (GlcNAc) residues in peptidoglycan, from either the reducing or the non-reducing ends of the peptidoglycan chains, with concomitant formation of a 1,6-anhydrobond in the MurNAc residue.. Functionally, murein-degrading enzyme that degrades murein glycan strands and insoluble, high-molecular weight murein sacculi, with the concomitant formation of a 1,6-anhydromuramoyl product. Lytic transglycosylases (LTs) play an integral role in the metabolism of the peptidoglycan (PG) sacculus. Their lytic action creates space within the PG sacculus to allow for its expansion as well as for the insertion of various structures such as secretion systems and flagella. The chain is Membrane-bound lytic murein transglycosylase F from Pseudomonas putida (strain ATCC 700007 / DSM 6899 / JCM 31910 / BCRC 17059 / LMG 24140 / F1).